The primary structure comprises 139 residues: Arsenate reductase (139 aa).

Catalysis depends on nucleophile residues cysteine 10, cysteine 82, and cysteine 89. 2 cysteine pairs are disulfide-bonded: cysteine 10/cysteine 82 and cysteine 82/cysteine 89.

Belongs to the low molecular weight phosphotyrosine protein phosphatase family. Thioredoxin-coupled ArsC subfamily. Monomer.

Its subcellular location is the cytoplasm. It carries out the reaction arsenate + [thioredoxin]-dithiol + H(+) = arsenite + [thioredoxin]-disulfide + H2O. Activity is potassium and sulfate-independent. Catalyzes the reduction of arsenate [As(V)] to arsenite [As(III)]. In vitro, can dephosphorylate para-nitrophenyl phosphate (pNPP). The sequence is that of Arsenate reductase from Bacillus subtilis (strain 168).